The following is a 238-amino-acid chain: Putative pectate lyase X (238 aa).

A signal peptide spans 1–22 (MKYLLPTAAAGLLLLAAQPAMA). 3 residues coordinate Ca(2+): aspartate 153, glutamate 188, and aspartate 192.

Belongs to the polysaccharide lyase 1 family. It depends on Ca(2+) as a cofactor.

The enzyme catalyses Eliminative cleavage of (1-&gt;4)-alpha-D-galacturonan to give oligosaccharides with 4-deoxy-alpha-D-galact-4-enuronosyl groups at their non-reducing ends.. Its pathway is glycan metabolism; pectin degradation; 2-dehydro-3-deoxy-D-gluconate from pectin: step 2/5. Its function is as follows. Involved in maceration and soft-rotting of plant tissue. This chain is Putative pectate lyase X (PEL X), found in Pectobacterium carotovorum (Erwinia carotovora).